Here is a 443-residue protein sequence, read N- to C-terminus: Putative type II methyltransferase M.BsuMIIP (443 aa).

The region spanning 4 to 440 is the SAM-dependent MTase C5-type domain; it reads LRVMSLFSGI…QELIHTYVNK (437 aa). Cys78 is an active-site residue.

This sequence belongs to the class I-like SAM-binding methyltransferase superfamily. C5-methyltransferase family.

It carries out the reaction a 2'-deoxycytidine in DNA + S-adenosyl-L-methionine = a 5-methyl-2'-deoxycytidine in DNA + S-adenosyl-L-homocysteine + H(+). In terms of biological role, a putative methylase, recognizes the double-stranded sequence 5'-GGCC-3', methylates C-?. There is no known cognate restriction enzyme. This Bacillus subtilis (strain 168) protein is Putative type II methyltransferase M.BsuMIIP (mtbP).